The primary structure comprises 222 residues: Pyridoxal phosphate homeostasis protein (222 aa).

Residue K35 is modified to N6-(pyridoxal phosphate)lysine.

This sequence belongs to the pyridoxal phosphate-binding protein YggS/PROSC family.

Its function is as follows. Pyridoxal 5'-phosphate (PLP)-binding protein, which is involved in PLP homeostasis. The chain is Pyridoxal phosphate homeostasis protein from Helicobacter pylori (strain ATCC 700392 / 26695) (Campylobacter pylori).